The sequence spans 126 residues: Alpha-lactalbumin (126 aa).

Residues 1–126 enclose the C-type lysozyme domain; that stretch reads RIFQICELSR…CNSDLDQWKC (126 aa). 4 disulfides stabilise this stretch: Cys-6-Cys-126, Cys-30-Cys-117, Cys-63-Cys-82, and Cys-78-Cys-96. N-linked (GlcNAc...) asparagine glycosylation is present at Asn-47. Ca(2+) contacts are provided by Lys-84, Asp-87, Asp-89, Asp-92, and Asp-93.

This sequence belongs to the glycosyl hydrolase 22 family. In terms of assembly, lactose synthase (LS) is a heterodimer of a catalytic component, beta1,4-galactosyltransferase (beta4Gal-T1) and a regulatory component, alpha-lactalbumin (LA). Mammary gland specific. Secreted in milk.

The protein localises to the secreted. Its function is as follows. Regulatory subunit of lactose synthase, changes the substrate specificity of galactosyltransferase in the mammary gland making glucose a good acceptor substrate for this enzyme. This enables LS to synthesize lactose, the major carbohydrate component of milk. In other tissues, galactosyltransferase transfers galactose onto the N-acetylglucosamine of the oligosaccharide chains in glycoproteins. The polypeptide is Alpha-lactalbumin (LALBA) (Ornithorhynchus anatinus (Duckbill platypus)).